A 289-amino-acid chain; its full sequence is 4-hydroxy-tetrahydrodipicolinate synthase (289 aa).

Residue Thr-42 coordinates pyruvate. Tyr-129 (proton donor/acceptor) is an active-site residue. The Schiff-base intermediate with substrate role is filled by Lys-157. Residue Ile-198 coordinates pyruvate.

Belongs to the DapA family. In terms of assembly, homotetramer; dimer of dimers.

Its subcellular location is the cytoplasm. It catalyses the reaction L-aspartate 4-semialdehyde + pyruvate = (2S,4S)-4-hydroxy-2,3,4,5-tetrahydrodipicolinate + H2O + H(+). It functions in the pathway amino-acid biosynthesis; L-lysine biosynthesis via DAP pathway; (S)-tetrahydrodipicolinate from L-aspartate: step 3/4. Catalyzes the condensation of (S)-aspartate-beta-semialdehyde [(S)-ASA] and pyruvate to 4-hydroxy-tetrahydrodipicolinate (HTPA). This is 4-hydroxy-tetrahydrodipicolinate synthase from Chlamydia caviae (strain ATCC VR-813 / DSM 19441 / 03DC25 / GPIC) (Chlamydophila caviae).